Reading from the N-terminus, the 195-residue chain is MFDIGFSELALIAVVALVVLGPERLPKAARFAGLWVRRARMQWDSVKQELERELEAEELKRSLQDVQASLREAEGQLRNTQQQVEDGARGLHDQARELHDEVGRDIDIRTSATPLAAPLELQADAPVVLEPGSAQPHTPVPAPAPVVAQAQPMAPAPKQTLVPAPHGSLTSTQVTTHAPTASATASSTSPQEKTP.

A helical transmembrane segment spans residues 1–21 (MFDIGFSELALIAVVALVVLG). Residues 130–195 (EPGSAQPHTP…SSTSPQEKTP (66 aa)) form a disordered region. 2 stretches are compositionally biased toward low complexity: residues 145–157 (PVVA…APAP) and 175–195 (TTHA…EKTP).

Belongs to the TatB family. In terms of assembly, the Tat system comprises two distinct complexes: a TatABC complex, containing multiple copies of TatA, TatB and TatC subunits, and a separate TatA complex, containing only TatA subunits. Substrates initially bind to the TatABC complex, which probably triggers association of the separate TatA complex to form the active translocon.

The protein resides in the cell inner membrane. Functionally, part of the twin-arginine translocation (Tat) system that transports large folded proteins containing a characteristic twin-arginine motif in their signal peptide across membranes. Together with TatC, TatB is part of a receptor directly interacting with Tat signal peptides. TatB may form an oligomeric binding site that transiently accommodates folded Tat precursor proteins before their translocation. The protein is Sec-independent protein translocase protein TatB of Xanthomonas campestris pv. campestris (strain 8004).